Consider the following 138-residue polypeptide: Phospholipase A2 EC1 (138 aa).

The N-terminal stretch at 1 to 16 (MRTLWIVAVWLMSVEG) is a signal peptide. 7 cysteine pairs are disulfide-bonded: C42–C131, C44–C60, C59–C111, C65–C138, C66–C104, C73–C97, and C91–C102. Residues Y43, G45, and G47 each contribute to the Ca(2+) site. H63 is an active-site residue. D64 is a Ca(2+) binding site. Residue D105 is part of the active site.

It belongs to the phospholipase A2 family. Group II subfamily. It depends on Ca(2+) as a cofactor.

The protein resides in the secreted. It carries out the reaction a 1,2-diacyl-sn-glycero-3-phosphocholine + H2O = a 1-acyl-sn-glycero-3-phosphocholine + a fatty acid + H(+). The sequence is that of Phospholipase A2 EC1 from Echis coloratus (Carpet viper).